The chain runs to 395 residues: 1-deoxy-D-xylulose 5-phosphate reductoisomerase (395 aa).

5 residues coordinate NADPH: T10, G11, S12, I13, and N123. Residue K124 participates in 1-deoxy-D-xylulose 5-phosphate binding. E125 contacts NADPH. D149 is a Mn(2+) binding site. 1-deoxy-D-xylulose 5-phosphate contacts are provided by S150, E151, S185, and H208. Position 151 (E151) interacts with Mn(2+). Position 214 (G214) interacts with NADPH. Residues S221, N226, K227, and E230 each contribute to the 1-deoxy-D-xylulose 5-phosphate site. A Mn(2+)-binding site is contributed by E230.

This sequence belongs to the DXR family. It depends on Mg(2+) as a cofactor. The cofactor is Mn(2+).

It carries out the reaction 2-C-methyl-D-erythritol 4-phosphate + NADP(+) = 1-deoxy-D-xylulose 5-phosphate + NADPH + H(+). It participates in isoprenoid biosynthesis; isopentenyl diphosphate biosynthesis via DXP pathway; isopentenyl diphosphate from 1-deoxy-D-xylulose 5-phosphate: step 1/6. In terms of biological role, catalyzes the NADPH-dependent rearrangement and reduction of 1-deoxy-D-xylulose-5-phosphate (DXP) to 2-C-methyl-D-erythritol 4-phosphate (MEP). The sequence is that of 1-deoxy-D-xylulose 5-phosphate reductoisomerase from Shewanella sediminis (strain HAW-EB3).